A 258-amino-acid chain; its full sequence is MILKENLTVVSQREIAPRIFEMVLKGDMVAQMQAGQFLHIRVPDASKLLRRPISIADINKEAQEATIIYRIEGRGTAIFSQLKAGDKLDCLGPQGNGFDLSVIDKGQKALIIGGGIGVPPLLEVAKQLCKKGVEAYAVLGFANKDAVILEEKMSQYATVVVTTDDGSYGQKGYVSTVVDNLDFLADAIYACGAPGMLKYVDKKFEKHPHAYLSTEERMACGMGACYACVVHVKGQEDAQNLRVCEDGPIFETGQIILD.

The FAD-binding FR-type domain occupies 2 to 100 (ILKENLTVVS…LGPQGNGFDL (99 aa)). Residues 51–54 (RPIS), 68–70 (IYR), and 75–76 (GT) each bind FAD. Residues cysteine 220, cysteine 225, cysteine 228, and cysteine 244 each coordinate [2Fe-2S] cluster.

This sequence belongs to the PyrK family. As to quaternary structure, heterotetramer of 2 PyrK and 2 PyrD type B subunits. [2Fe-2S] cluster is required as a cofactor. FAD serves as cofactor.

The protein operates within pyrimidine metabolism; UMP biosynthesis via de novo pathway; orotate from (S)-dihydroorotate (NAD(+) route): step 1/1. In terms of biological role, responsible for channeling the electrons from the oxidation of dihydroorotate from the FMN redox center in the PyrD type B subunit to the ultimate electron acceptor NAD(+). The chain is Dihydroorotate dehydrogenase B (NAD(+)), electron transfer subunit from Streptococcus mutans serotype c (strain ATCC 700610 / UA159).